Reading from the N-terminus, the 513-residue chain is ATP synthase subunit alpha (513 aa).

Residue 169–176 (GDRQTGKT) participates in ATP binding.

It belongs to the ATPase alpha/beta chains family. F-type ATPases have 2 components, CF(1) - the catalytic core - and CF(0) - the membrane proton channel. CF(1) has five subunits: alpha(3), beta(3), gamma(1), delta(1), epsilon(1). CF(0) has three main subunits: a(1), b(2) and c(9-12). The alpha and beta chains form an alternating ring which encloses part of the gamma chain. CF(1) is attached to CF(0) by a central stalk formed by the gamma and epsilon chains, while a peripheral stalk is formed by the delta and b chains.

The protein localises to the cell inner membrane. It carries out the reaction ATP + H2O + 4 H(+)(in) = ADP + phosphate + 5 H(+)(out). In terms of biological role, produces ATP from ADP in the presence of a proton gradient across the membrane. The alpha chain is a regulatory subunit. This chain is ATP synthase subunit alpha, found in Pasteurella multocida (strain Pm70).